A 396-amino-acid polypeptide reads, in one-letter code: Aspartate aminotransferase (396 aa).

Positions 34, 130, and 183 each coordinate L-aspartate. K246 carries the post-translational modification N6-(pyridoxal phosphate)lysine. An L-aspartate-binding site is contributed by R374.

Belongs to the class-I pyridoxal-phosphate-dependent aminotransferase family. As to quaternary structure, homodimer. Pyridoxal 5'-phosphate serves as cofactor.

Its subcellular location is the cytoplasm. The enzyme catalyses L-aspartate + 2-oxoglutarate = oxaloacetate + L-glutamate. The polypeptide is Aspartate aminotransferase (aspC) (Escherichia coli (strain K12)).